The chain runs to 196 residues: MPIGVPKVPFRNPGEDSSNWIDVYNRLYRERLLFLGQDIDSEISNQLIGLMVYLSTESEIKDLYLFINSPGGWVIPGIAIYDTMQFVRPDVQTVCMGLAASMGSFILVGGKITKRLAFPHARVMIHQPFAAFYEAQIGEFVLEAEELLKLREILTRVYAQRTGKPLWVVSEDMERDVFMSAAEAQVHGIVDLVAVA.

The Nucleophile role is filled by Ser101. The active site involves His126.

It belongs to the peptidase S14 family. As to quaternary structure, component of the chloroplastic Clp protease core complex.

It is found in the plastid. Its subcellular location is the chloroplast stroma. The catalysed reaction is Hydrolysis of proteins to small peptides in the presence of ATP and magnesium. alpha-casein is the usual test substrate. In the absence of ATP, only oligopeptides shorter than five residues are hydrolyzed (such as succinyl-Leu-Tyr-|-NHMec, and Leu-Tyr-Leu-|-Tyr-Trp, in which cleavage of the -Tyr-|-Leu- and -Tyr-|-Trp bonds also occurs).. In terms of biological role, cleaves peptides in various proteins in a process that requires ATP hydrolysis. Has a chymotrypsin-like activity. Plays a major role in the degradation of misfolded proteins. The protein is ATP-dependent Clp protease proteolytic subunit of Populus trichocarpa (Western balsam poplar).